The primary structure comprises 335 residues: Beta-hexosaminidase (335 aa).

Substrate-binding positions include Asp60, Arg68, Arg133, and 163-164 (KH). His176 (proton donor/acceptor) is an active-site residue. Residue Asp247 is the Nucleophile of the active site.

Belongs to the glycosyl hydrolase 3 family. NagZ subfamily. Monomer.

It localises to the cytoplasm. It catalyses the reaction Hydrolysis of terminal non-reducing N-acetyl-D-hexosamine residues in N-acetyl-beta-D-hexosaminides.. Its pathway is cell wall biogenesis; peptidoglycan recycling. Functionally, plays a role in peptidoglycan recycling by cleaving the terminal beta-1,4-linked N-acetylglucosamine (GlcNAc) from peptide-linked peptidoglycan fragments, giving rise to free GlcNAc, anhydro-N-acetylmuramic acid and anhydro-N-acetylmuramic acid-linked peptides. The sequence is that of Beta-hexosaminidase from Xylella fastidiosa (strain 9a5c).